A 337-amino-acid chain; its full sequence is Probable dihydroorotase (337 aa).

The Zn(2+) site is built by H12, H14, K95, H132, H170, and D240. N6-carboxylysine is present on K95.

It belongs to the metallo-dependent hydrolases superfamily. DHOase family. Class II DHOase subfamily. Requires Zn(2+) as cofactor.

It carries out the reaction (S)-dihydroorotate + H2O = N-carbamoyl-L-aspartate + H(+). Its pathway is pyrimidine metabolism; UMP biosynthesis via de novo pathway; (S)-dihydroorotate from bicarbonate: step 3/3. The sequence is that of Probable dihydroorotase (ura2) from Schizosaccharomyces pombe (strain 972 / ATCC 24843) (Fission yeast).